The sequence spans 347 residues: NADH-ubiquinone oxidoreductase chain 2 (347 aa).

Helical transmembrane passes span Pro3–Thr23, His25–Met45, Tyr59–Val79, Ile96–Pro116, Val122–Leu142, Ile149–Gly169, Ile178–Pro198, Met200–Met220, Leu240–Phe260, Met276–Leu296, and Leu326–Leu346.

The protein belongs to the complex I subunit 2 family. Core subunit of respiratory chain NADH dehydrogenase (Complex I) which is composed of 45 different subunits. Interacts with TMEM242.

Its subcellular location is the mitochondrion inner membrane. It carries out the reaction a ubiquinone + NADH + 5 H(+)(in) = a ubiquinol + NAD(+) + 4 H(+)(out). Its function is as follows. Core subunit of the mitochondrial membrane respiratory chain NADH dehydrogenase (Complex I) which catalyzes electron transfer from NADH through the respiratory chain, using ubiquinone as an electron acceptor. Essential for the catalytic activity and assembly of complex I. This chain is NADH-ubiquinone oxidoreductase chain 2, found in Nyctimene albiventer (Common tube-nosed fruit bat).